The following is a 345-amino-acid chain: Probable fructokinase-3 (345 aa).

Belongs to the carbohydrate kinase PfkB family.

It catalyses the reaction D-fructose + ATP = D-fructose 6-phosphate + ADP + H(+). It participates in glycan biosynthesis; starch biosynthesis. May play an important role in maintaining the flux of carbon towards starch formation. In Arabidopsis thaliana (Mouse-ear cress), this protein is Probable fructokinase-3.